The chain runs to 185 residues: Ribosome maturation factor RimM (185 aa).

In terms of domain architecture, PRC barrel spans 106-185; sequence TGDYYWKDLI…TIEVDWDPGF (80 aa).

It belongs to the RimM family. Binds ribosomal protein uS19.

It localises to the cytoplasm. An accessory protein needed during the final step in the assembly of 30S ribosomal subunit, possibly for assembly of the head region. Essential for efficient processing of 16S rRNA. May be needed both before and after RbfA during the maturation of 16S rRNA. It has affinity for free ribosomal 30S subunits but not for 70S ribosomes. This is Ribosome maturation factor RimM from Photorhabdus laumondii subsp. laumondii (strain DSM 15139 / CIP 105565 / TT01) (Photorhabdus luminescens subsp. laumondii).